The sequence spans 230 residues: UPF0173 metal-dependent hydrolase Rsph17029_0942 (230 aa).

Belongs to the UPF0173 family.

This chain is UPF0173 metal-dependent hydrolase Rsph17029_0942, found in Cereibacter sphaeroides (strain ATCC 17029 / ATH 2.4.9) (Rhodobacter sphaeroides).